Consider the following 415-residue polypeptide: Methylmalonic aciduria type A homolog, mitochondrial (415 aa).

A mitochondrion-targeting transit peptide spans 1 to 62 (MTISTLLLSP…LLSDGFRRTL (62 aa)). Residues 147–155 (GPPGAGKST), Asp-289, and 325–327 (SAR) each bind GTP.

It belongs to the SIMIBI class G3E GTPase family. ArgK/MeaB subfamily. In terms of assembly, homodimer. Interacts with MMUT (the apoenzyme form); the interaction is GTP dependent.

The protein resides in the mitochondrion. The protein localises to the cytoplasm. It catalyses the reaction GTP + H2O = GDP + phosphate + H(+). With respect to regulation, GTPase activity is stimulated by MMUT. Functionally, GTPase, binds and hydrolyzes GTP. Involved in intracellular vitamin B12 metabolism, mediates the transport of cobalamin (Cbl) into mitochondria for the final steps of adenosylcobalamin (AdoCbl) synthesis. Functions as a G-protein chaperone that assists AdoCbl cofactor delivery from MMAB to the methylmalonyl-CoA mutase (MMUT). Plays a dual role as both a protectase and a reactivase for MMUT. Protects MMUT from progressive inactivation by oxidation by decreasing the rate of the formation of the oxidized inactive cofactor hydroxocobalamin (OH2Cbl). Additionally acts a reactivase by promoting the replacement of OH2Cbl by the active cofactor AdoCbl, restoring the activity of MMUT in the presence and hydrolysis of GTP. The polypeptide is Methylmalonic aciduria type A homolog, mitochondrial (Mus musculus (Mouse)).